The sequence spans 376 residues: MSFAPLQNDTFLRACRRQATDYTPLWLMRQAGRYLPEYKATRARAGSFMGLATNVDYATEVTLQPLERFPLDAAILFSDILTVPDAMGLGLSFAEGEGPRFARVVRDEAAVAELAVPDMEKLRYVFDAVTSIRRALDGRVPLIGFSGSPWTLACYMVEGSGSDDYRLVKTLMYSRPDLMHRILAINADAVAAYLNAQIDAGAQAVMVFDSWGGVLADGAFQEFSLAYTTRVLAQLKRTGVDGTDVPRIVFTKGGALWLEDMKGLDCEVLGLDWTANLARARALVGGAVGGPGKALQGNIDPNVLFAPPEAIAAQARAVLDRFGAPHTDRGTTGPTHIFNLGHGISQHTPPEHVAALVEAVHGHSRAMRAAAGTGRA.

Residues 29–33 (RQAGR), Asp79, Tyr155, Ser210, and His342 each bind substrate.

This sequence belongs to the uroporphyrinogen decarboxylase family. In terms of assembly, homodimer.

It localises to the cytoplasm. The catalysed reaction is uroporphyrinogen III + 4 H(+) = coproporphyrinogen III + 4 CO2. It functions in the pathway porphyrin-containing compound metabolism; protoporphyrin-IX biosynthesis; coproporphyrinogen-III from 5-aminolevulinate: step 4/4. Functionally, catalyzes the decarboxylation of four acetate groups of uroporphyrinogen-III to yield coproporphyrinogen-III. In Paracidovorax citrulli (strain AAC00-1) (Acidovorax citrulli), this protein is Uroporphyrinogen decarboxylase.